The following is a 335-amino-acid chain: Glycerol-3-phosphate dehydrogenase [NAD(P)+] (335 aa).

Positions 11, 30, and 106 each coordinate NADPH. The sn-glycerol 3-phosphate site is built by K106, G135, and S137. A139 serves as a coordination point for NADPH. The sn-glycerol 3-phosphate site is built by K190, D243, S253, R254, and N255. The active-site Proton acceptor is the K190. Residue R254 coordinates NADPH. NADPH is bound by residues V278 and E280.

It belongs to the NAD-dependent glycerol-3-phosphate dehydrogenase family.

The protein resides in the cytoplasm. The catalysed reaction is sn-glycerol 3-phosphate + NAD(+) = dihydroxyacetone phosphate + NADH + H(+). It carries out the reaction sn-glycerol 3-phosphate + NADP(+) = dihydroxyacetone phosphate + NADPH + H(+). Its pathway is membrane lipid metabolism; glycerophospholipid metabolism. Functionally, catalyzes the reduction of the glycolytic intermediate dihydroxyacetone phosphate (DHAP) to sn-glycerol 3-phosphate (G3P), the key precursor for phospholipid synthesis. This Paucimonas lemoignei (Pseudomonas lemoignei) protein is Glycerol-3-phosphate dehydrogenase [NAD(P)+].